Reading from the N-terminus, the 273-residue chain is MQWNVPRTMSRLALRTFVEAQKARLFDHHWRIKGPLLVHRGEYRVAWTPHLRKQWLHLSAVQCLAKQRNLLDAQPPQLGTLRQERWEQDILSKRVLSSSSTSQETPSEKKEETDPLQDKSISLYQRFKKTFRQYGKVLIPVHLITSGIWFGTFYYATIKGVNVIPFLEVIGLPDSIVDILKNSQSGNALTAYAMFKIATPARYTVTLGGTSFTVKYLRSHGYMSTPPPVKEYLQGRMEETKELITEKMEETKDRLTEKLQETKGKVSFKKKVE.

Residues 94–116 (RVLSSSSTSQETPSEKKEETDPL) are disordered. Over residues 106–116 (PSEKKEETDPL) the composition is skewed to basic and acidic residues. The DUF1279 domain occupies 118–230 (DKSISLYQRF…GYMSTPPPVK (113 aa)). A helical membrane pass occupies residues 138–158 (LIPVHLITSGIWFGTFYYATI). Positions 233 to 269 (LQGRMEETKELITEKMEETKDRLTEKLQETKGKVSFK) form a coiled coil.

Belongs to the FAM210 family. In terms of assembly, interacts with ATAD3A. As to expression, expressed in skeletal muscle, heart, brain but not in bone.

Its subcellular location is the membrane. The protein resides in the mitochondrion. The protein localises to the cytoplasm. In terms of biological role, may play a role in the structure and strength of both muscle and bone. This chain is Protein FAM210A (Fam210a), found in Mus musculus (Mouse).